A 237-amino-acid chain; its full sequence is MPVVYKRILLKLSGEALMGDGHYGIDRAVVEHIVVEVAGVLQLGVEVAIVVGGGNIFRGMKSAGDGMDRVTADYMGMLATTMNALALHDAMRRNGVVSRVQSALRIDQVVEPYVRGKALRYLDERKVVVFAAGTGNPFFTTDTAAALRGMEMNANIVLKATKVDGIYTSDPLKNKDAQRFQSLTFDEAISKNLQVMDATALTLCRDQKLPINVFSIFKTGALKRVIMGEDEGTSVFV.

11 to 14 (KLSG) serves as a coordination point for ATP. UMP is bound at residue glycine 53. ATP contacts are provided by glycine 54 and arginine 58. UMP is bound by residues aspartate 73 and 134–141 (TGNPFFTT). Threonine 161, tyrosine 167, and aspartate 170 together coordinate ATP.

This sequence belongs to the UMP kinase family. As to quaternary structure, homohexamer.

The protein resides in the cytoplasm. The catalysed reaction is UMP + ATP = UDP + ADP. It participates in pyrimidine metabolism; CTP biosynthesis via de novo pathway; UDP from UMP (UMPK route): step 1/1. With respect to regulation, inhibited by UTP. Catalyzes the reversible phosphorylation of UMP to UDP. The chain is Uridylate kinase from Nitrosomonas europaea (strain ATCC 19718 / CIP 103999 / KCTC 2705 / NBRC 14298).